The following is a 276-amino-acid chain: Formamidopyrimidine-DNA glycosylase (276 aa).

Pro-2 serves as the catalytic Schiff-base intermediate with DNA. The Proton donor role is filled by Glu-3. Lys-58 acts as the Proton donor; for beta-elimination activity in catalysis. DNA is bound by residues His-94, Arg-112, and Arg-157. An FPG-type zinc finger spans residues 242 to 276 (FVYDRAGEPCRVCGAPIRQIVQGQRSTYFCPNCQR). The active-site Proton donor; for delta-elimination activity is the Arg-266.

This sequence belongs to the FPG family. Monomer. The cofactor is Zn(2+).

It carries out the reaction Hydrolysis of DNA containing ring-opened 7-methylguanine residues, releasing 2,6-diamino-4-hydroxy-5-(N-methyl)formamidopyrimidine.. It catalyses the reaction 2'-deoxyribonucleotide-(2'-deoxyribose 5'-phosphate)-2'-deoxyribonucleotide-DNA = a 3'-end 2'-deoxyribonucleotide-(2,3-dehydro-2,3-deoxyribose 5'-phosphate)-DNA + a 5'-end 5'-phospho-2'-deoxyribonucleoside-DNA + H(+). Involved in base excision repair of DNA damaged by oxidation or by mutagenic agents. Acts as a DNA glycosylase that recognizes and removes damaged bases. Has a preference for oxidized purines, such as 7,8-dihydro-8-oxoguanine (8-oxoG). Has AP (apurinic/apyrimidinic) lyase activity and introduces nicks in the DNA strand. Cleaves the DNA backbone by beta-delta elimination to generate a single-strand break at the site of the removed base with both 3'- and 5'-phosphates. The sequence is that of Formamidopyrimidine-DNA glycosylase from Burkholderia pseudomallei (strain 1710b).